An 881-amino-acid polypeptide reads, in one-letter code: Alanine--tRNA ligase (881 aa).

4 residues coordinate Zn(2+): H563, H567, C672, and H676.

It belongs to the class-II aminoacyl-tRNA synthetase family. Requires Zn(2+) as cofactor.

It localises to the cytoplasm. The catalysed reaction is tRNA(Ala) + L-alanine + ATP = L-alanyl-tRNA(Ala) + AMP + diphosphate. Catalyzes the attachment of alanine to tRNA(Ala) in a two-step reaction: alanine is first activated by ATP to form Ala-AMP and then transferred to the acceptor end of tRNA(Ala). Also edits incorrectly charged Ser-tRNA(Ala) and Gly-tRNA(Ala) via its editing domain. In Azorhizobium caulinodans (strain ATCC 43989 / DSM 5975 / JCM 20966 / LMG 6465 / NBRC 14845 / NCIMB 13405 / ORS 571), this protein is Alanine--tRNA ligase.